Reading from the N-terminus, the 241-residue chain is Probable transcriptional regulatory protein Mpe_A1337 (241 aa).

The interval 1-20 (MAGHSKWANIQHRKGRQDEK) is disordered.

This sequence belongs to the TACO1 family.

It is found in the cytoplasm. This chain is Probable transcriptional regulatory protein Mpe_A1337, found in Methylibium petroleiphilum (strain ATCC BAA-1232 / LMG 22953 / PM1).